The sequence spans 504 residues: Histidine ammonia-lyase (504 aa).

The segment at residues 142-144 is a cross-link (5-imidazolinone (Ala-Gly)); it reads ASG. Position 143 is a 2,3-didehydroalanine (Ser) (Ser-143).

It belongs to the PAL/histidase family. In terms of processing, contains an active site 4-methylidene-imidazol-5-one (MIO), which is formed autocatalytically by cyclization and dehydration of residues Ala-Ser-Gly.

It is found in the cytoplasm. It carries out the reaction L-histidine = trans-urocanate + NH4(+). The protein operates within amino-acid degradation; L-histidine degradation into L-glutamate; N-formimidoyl-L-glutamate from L-histidine: step 1/3. This Staphylococcus aureus (strain JH1) protein is Histidine ammonia-lyase.